The following is a 334-amino-acid chain: Fructose-1,6-bisphosphatase class 1 2 (334 aa).

Positions 92, 114, 116, and 117 each coordinate Mg(2+). Substrate contacts are provided by residues 117 to 120, Asn208, and Lys274; that span reads DGSS. Glu280 contributes to the Mg(2+) binding site.

It belongs to the FBPase class 1 family. As to quaternary structure, homotetramer. Mg(2+) serves as cofactor.

The protein localises to the cytoplasm. It carries out the reaction beta-D-fructose 1,6-bisphosphate + H2O = beta-D-fructose 6-phosphate + phosphate. It participates in carbohydrate biosynthesis; gluconeogenesis. In Albidiferax ferrireducens (strain ATCC BAA-621 / DSM 15236 / T118) (Rhodoferax ferrireducens), this protein is Fructose-1,6-bisphosphatase class 1 2.